Reading from the N-terminus, the 474-residue chain is Glutamate--tRNA ligase 1 (474 aa).

Residues P11–G21 carry the 'HIGH' region motif. The 'KMSKS' region motif lies at K240–R244. K243 is a binding site for ATP.

It belongs to the class-I aminoacyl-tRNA synthetase family. Glutamate--tRNA ligase type 1 subfamily. As to quaternary structure, monomer.

The protein localises to the cytoplasm. The enzyme catalyses tRNA(Glu) + L-glutamate + ATP = L-glutamyl-tRNA(Glu) + AMP + diphosphate. Functionally, catalyzes the attachment of glutamate to tRNA(Glu) in a two-step reaction: glutamate is first activated by ATP to form Glu-AMP and then transferred to the acceptor end of tRNA(Glu). The chain is Glutamate--tRNA ligase 1 from Mesorhizobium japonicum (strain LMG 29417 / CECT 9101 / MAFF 303099) (Mesorhizobium loti (strain MAFF 303099)).